The sequence spans 198 residues: RNA-free ribonuclease P (198 aa).

Belongs to the HARP family.

The catalysed reaction is Endonucleolytic cleavage of RNA, removing 5'-extranucleotides from tRNA precursor.. RNA-free RNase P that catalyzes the removal of the 5'-leader sequence from pre-tRNA to produce the mature 5'-terminus. In Thermococcus kodakarensis (strain ATCC BAA-918 / JCM 12380 / KOD1) (Pyrococcus kodakaraensis (strain KOD1)), this protein is RNA-free ribonuclease P.